The following is a 201-amino-acid chain: MNETNYNDIDQLIYLFSKLPGLGIRSARRIALYLLQDKDVRLKSLINNLVEIDKKIVKCEICGNMDTENICRICSSEYRDKSIIAIVETVAELWAMERSGNFKGLYHVLGHNLSAASRQNPSILRLPELLTRCFAENIKEVIIATNSTLEGQTTAYFITEYLKEHPAKISRLASGIPIGGELDYLDEGTVSAAINLRQPFE.

The C4-type zinc-finger motif lies at 59–74 (CEICGNMDTENICRIC). In terms of domain architecture, Toprim spans 82–177 (SIIAIVETVA…KISRLASGIP (96 aa)).

Belongs to the RecR family.

Functionally, may play a role in DNA repair. It seems to be involved in an RecBC-independent recombinational process of DNA repair. It may act with RecF and RecO. The chain is Recombination protein RecR from Rickettsia rickettsii (strain Iowa).